Reading from the N-terminus, the 449-residue chain is Chromosomal replication initiator protein DnaA (449 aa).

The segment at 1-73 (MTQNPQWLWQ…TETIAELLQQ (73 aa)) is domain I, interacts with DnaA modulators. Residues 73-109 (QPVKVRLTSPEGNTLAATQSFYSSRSGQSTRPGKKTP) are domain II. The span at 90–103 (TQSFYSSRSGQSTR) shows a compositional bias: polar residues. Residues 90 to 110 (TQSFYSSRSGQSTRPGKKTPE) form a disordered region. A domain III, AAA+ region region spans residues 110-326 (ELNSKYTFSR…GALLRAVTHI (217 aa)). ATP-binding residues include Gly154, Gly156, Lys157, and Thr158. Residues 327–449 (AISGLPMTVE…DRINHHHQNL (123 aa)) are domain IV, binds dsDNA.

The protein belongs to the DnaA family. As to quaternary structure, oligomerizes as a right-handed, spiral filament on DNA at oriC.

The protein resides in the cytoplasm. In terms of biological role, plays an essential role in the initiation and regulation of chromosomal replication. ATP-DnaA binds to the origin of replication (oriC) to initiate formation of the DNA replication initiation complex once per cell cycle. Binds the DnaA box (a 9 base pair repeat at the origin) and separates the double-stranded (ds)DNA. Forms a right-handed helical filament on oriC DNA; dsDNA binds to the exterior of the filament while single-stranded (ss)DNA is stabiized in the filament's interior. The ATP-DnaA-oriC complex binds and stabilizes one strand of the AT-rich DNA unwinding element (DUE), permitting loading of DNA polymerase. After initiation quickly degrades to an ADP-DnaA complex that is not apt for DNA replication. Binds acidic phospholipids. The protein is Chromosomal replication initiator protein DnaA of Picosynechococcus sp. (strain ATCC 27264 / PCC 7002 / PR-6) (Agmenellum quadruplicatum).